Reading from the N-terminus, the 158-residue chain is NAD(P)H-quinone oxidoreductase subunit J, chloroplastic (158 aa).

This sequence belongs to the complex I 30 kDa subunit family. In terms of assembly, NDH is composed of at least 16 different subunits, 5 of which are encoded in the nucleus.

The protein resides in the plastid. The protein localises to the chloroplast thylakoid membrane. It carries out the reaction a plastoquinone + NADH + (n+1) H(+)(in) = a plastoquinol + NAD(+) + n H(+)(out). The enzyme catalyses a plastoquinone + NADPH + (n+1) H(+)(in) = a plastoquinol + NADP(+) + n H(+)(out). Functionally, NDH shuttles electrons from NAD(P)H:plastoquinone, via FMN and iron-sulfur (Fe-S) centers, to quinones in the photosynthetic chain and possibly in a chloroplast respiratory chain. The immediate electron acceptor for the enzyme in this species is believed to be plastoquinone. Couples the redox reaction to proton translocation, and thus conserves the redox energy in a proton gradient. The protein is NAD(P)H-quinone oxidoreductase subunit J, chloroplastic of Vitis vinifera (Grape).